A 102-amino-acid polypeptide reads, in one-letter code: Peptide chaperone MftB (102 aa).

It belongs to the peptide chaperone MftB family.

Peptide chaperone involved in the biosynthesis of the enzyme cofactor mycofactocin (MFT). Binds MftA and MftC with high affinity, and is essential for MftC activity on MftA, likely via the formation of a ternary complex. Is required for the in vivo ethanol assimilation in M.smegmatis. This is Peptide chaperone MftB from Mycolicibacterium smegmatis (strain ATCC 700084 / mc(2)155) (Mycobacterium smegmatis).